The chain runs to 449 residues: MKSYEVNFDGLVGPTHNYGGLSYGNVASQSNSQQGSNPREAARQGLAKMKALADMGFKQGVLAPQERPDVAALRRLGFSGSDAEVIQRAAADAMPLLVASCSASSMWVANAATVSPSADTADGRVHFTAANLNCKYHRSIEHPTTSRVLGAMFNNEKHFAHHPALPAVAQFGDEGAANHTRFCSAYGEAGVEFFVYGRSAFDSRYPAPQKYPARQTLEASQAVARLHGLSDDGVVYAQQNPAVIDQGVFHNDVISVGNGEVLFYHEDAFLETDAVLGQLRAKLASKGGNFQAICVPRAAVTVEDAVRSYLFNSQLLSRDDGSMLLVVPEECRNNERVWAYLGQLTSQGGPVNEVKIFDLKQSMQNGGGPACLRLRVALKETELAAVNQGVIMTASLYDTLLQWVDRHYRDRLGEADLADPQLLVECRTALDELTQILKLGSVYPFQRQP.

Residues 19–28 (GGLSYGNVAS), Asn-110, and 137–138 (HR) contribute to the substrate site. Residues 23–43 (YGNVASQSNSQQGSNPREAAR) are disordered. Over residues 25–37 (NVASQSNSQQGSN) the composition is skewed to polar residues. Glu-174 is an active-site residue. Arg-214 contributes to the substrate binding site. His-250 is an active-site residue. 2 residues coordinate substrate: Asp-252 and Asn-365. Cys-371 functions as the Nucleophile in the catalytic mechanism.

The protein belongs to the succinylarginine dihydrolase family. In terms of assembly, homodimer.

The catalysed reaction is N(2)-succinyl-L-arginine + 2 H2O + 2 H(+) = N(2)-succinyl-L-ornithine + 2 NH4(+) + CO2. Its pathway is amino-acid degradation; L-arginine degradation via AST pathway; L-glutamate and succinate from L-arginine: step 2/5. In terms of biological role, catalyzes the hydrolysis of N(2)-succinylarginine into N(2)-succinylornithine, ammonia and CO(2). In Pseudomonas putida (strain GB-1), this protein is N-succinylarginine dihydrolase.